Consider the following 396-residue polypeptide: Elongation factor Tu 1 (396 aa).

Positions 10-206 (KPHCNVGTIG…AVDDYIPQPE (197 aa)) constitute a tr-type G domain. The segment at 19-26 (GHVDHGKT) is G1. GTP is bound at residue 19–26 (GHVDHGKT). Residue Thr26 coordinates Mg(2+). Residues 60 to 64 (GITIS) form a G2 region. A G3 region spans residues 81 to 84 (DCPG). GTP-binding positions include 81–85 (DCPGH) and 136–139 (NKCD). A G4 region spans residues 136 to 139 (NKCD). Positions 174–176 (SAL) are G5.

The protein belongs to the TRAFAC class translation factor GTPase superfamily. Classic translation factor GTPase family. EF-Tu/EF-1A subfamily. In terms of assembly, monomer.

The protein resides in the cytoplasm. It carries out the reaction GTP + H2O = GDP + phosphate + H(+). GTP hydrolase that promotes the GTP-dependent binding of aminoacyl-tRNA to the A-site of ribosomes during protein biosynthesis. The sequence is that of Elongation factor Tu 1 from Rhodospirillum rubrum (strain ATCC 11170 / ATH 1.1.1 / DSM 467 / LMG 4362 / NCIMB 8255 / S1).